A 233-amino-acid polypeptide reads, in one-letter code: Biosynthetic peptidoglycan transglycosylase (233 aa).

A helical membrane pass occupies residues 8–28 (LIALPVGIFIFFNAYVYGNII).

Belongs to the glycosyltransferase 51 family.

It is found in the cell inner membrane. The catalysed reaction is [GlcNAc-(1-&gt;4)-Mur2Ac(oyl-L-Ala-gamma-D-Glu-L-Lys-D-Ala-D-Ala)](n)-di-trans,octa-cis-undecaprenyl diphosphate + beta-D-GlcNAc-(1-&gt;4)-Mur2Ac(oyl-L-Ala-gamma-D-Glu-L-Lys-D-Ala-D-Ala)-di-trans,octa-cis-undecaprenyl diphosphate = [GlcNAc-(1-&gt;4)-Mur2Ac(oyl-L-Ala-gamma-D-Glu-L-Lys-D-Ala-D-Ala)](n+1)-di-trans,octa-cis-undecaprenyl diphosphate + di-trans,octa-cis-undecaprenyl diphosphate + H(+). It functions in the pathway cell wall biogenesis; peptidoglycan biosynthesis. In terms of biological role, peptidoglycan polymerase that catalyzes glycan chain elongation from lipid-linked precursors. In Neisseria gonorrhoeae (strain NCCP11945), this protein is Biosynthetic peptidoglycan transglycosylase.